We begin with the raw amino-acid sequence, 183 residues long: Segregation and condensation protein B (183 aa).

The protein belongs to the ScpB family. In terms of assembly, homodimer. Homodimerization may be required to stabilize the binding of ScpA to the Smc head domains. Component of a cohesin-like complex composed of ScpA, ScpB and the Smc homodimer, in which ScpA and ScpB bind to the head domain of Smc. The presence of the three proteins is required for the association of the complex with DNA.

It is found in the cytoplasm. In terms of biological role, participates in chromosomal partition during cell division. May act via the formation of a condensin-like complex containing Smc and ScpA that pull DNA away from mid-cell into both cell halves. The protein is Segregation and condensation protein B of Streptococcus pyogenes serotype M1.